The chain runs to 358 residues: scyllo-inositol 2-dehydrogenase (NADP(+)) IolW (358 aa).

It belongs to the Gfo/Idh/MocA family.

The catalysed reaction is scyllo-inositol + NADP(+) = scyllo-inosose + NADPH + H(+). Functionally, catalyzes the reversible NADPH-dependent reduction of scyllo-inosose (SIS) to scyllo-inositol (SI). Cannot use NADH instead of NADPH. May be involved in reduction of not only SIS but also various oxidized compounds manifested upon stressful conditions. This is scyllo-inositol 2-dehydrogenase (NADP(+)) IolW from Bacillus subtilis (strain 168).